A 299-amino-acid chain; its full sequence is ATP phosphoribosyltransferase (299 aa).

The protein belongs to the ATP phosphoribosyltransferase family. Long subfamily. It depends on Mg(2+) as a cofactor.

It is found in the cytoplasm. The enzyme catalyses 1-(5-phospho-beta-D-ribosyl)-ATP + diphosphate = 5-phospho-alpha-D-ribose 1-diphosphate + ATP. It participates in amino-acid biosynthesis; L-histidine biosynthesis; L-histidine from 5-phospho-alpha-D-ribose 1-diphosphate: step 1/9. With respect to regulation, feedback inhibited by histidine. Catalyzes the condensation of ATP and 5-phosphoribose 1-diphosphate to form N'-(5'-phosphoribosyl)-ATP (PR-ATP). Has a crucial role in the pathway because the rate of histidine biosynthesis seems to be controlled primarily by regulation of HisG enzymatic activity. This chain is ATP phosphoribosyltransferase, found in Campylobacter lari (strain RM2100 / D67 / ATCC BAA-1060).